The primary structure comprises 201 residues: Putative 3-methyladenine DNA glycosylase (201 aa).

It belongs to the DNA glycosylase MPG family.

The chain is Putative 3-methyladenine DNA glycosylase from Trichodesmium erythraeum (strain IMS101).